A 142-amino-acid chain; its full sequence is Putative mating-type transcription factor (142 aa).

The protein localises to the nucleus. This is Putative mating-type transcription factor from Eremothecium gossypii (strain ATCC 10895 / CBS 109.51 / FGSC 9923 / NRRL Y-1056) (Yeast).